Reading from the N-terminus, the 338-residue chain is 1-aminocyclopropane-1-carboxylate deaminase (338 aa).

At Lys51 the chain carries N6-(pyridoxal phosphate)lysine. Ser78 acts as the Nucleophile in catalysis.

The protein belongs to the ACC deaminase/D-cysteine desulfhydrase family. As to quaternary structure, homotrimer. Pyridoxal 5'-phosphate is required as a cofactor.

It carries out the reaction 1-aminocyclopropane-1-carboxylate + H2O = 2-oxobutanoate + NH4(+). In terms of biological role, catalyzes a cyclopropane ring-opening reaction, the irreversible conversion of 1-aminocyclopropane-1-carboxylate (ACC) to ammonia and alpha-ketobutyrate. Allows growth on ACC as a nitrogen source. The chain is 1-aminocyclopropane-1-carboxylate deaminase from Burkholderia cenocepacia (strain ATCC BAA-245 / DSM 16553 / LMG 16656 / NCTC 13227 / J2315 / CF5610) (Burkholderia cepacia (strain J2315)).